A 116-amino-acid chain; its full sequence is Large ribosomal subunit protein uL18 (116 aa).

The protein belongs to the universal ribosomal protein uL18 family. As to quaternary structure, part of the 50S ribosomal subunit; part of the 5S rRNA/L5/L18/L25 subcomplex. Contacts the 5S and 23S rRNAs.

Its function is as follows. This is one of the proteins that bind and probably mediate the attachment of the 5S RNA into the large ribosomal subunit, where it forms part of the central protuberance. This Pseudomonas fluorescens (strain SBW25) protein is Large ribosomal subunit protein uL18.